The chain runs to 368 residues: uncharacterized protein (368 aa).

Functionally, might be involved in sporulation. This is an uncharacterized protein from Brachyspira hyodysenteriae (strain ATCC 49526 / WA1).